Consider the following 763-residue polypeptide: Phosphoglycerol transferase I (763 aa).

Helical transmembrane passes span Met1 to Ala21, Trp26 to Tyr46, Ile77 to Val97, and Val108 to Phe128.

Belongs to the OpgB family.

It is found in the cell inner membrane. The catalysed reaction is a phosphatidylglycerol + a membrane-derived-oligosaccharide D-glucose = a 1,2-diacyl-sn-glycerol + a membrane-derived-oligosaccharide 6-(glycerophospho)-D-glucose.. The protein operates within glycan metabolism; osmoregulated periplasmic glucan (OPG) biosynthesis. Its function is as follows. Transfers a phosphoglycerol residue from phosphatidylglycerol to the membrane-bound nascent glucan backbones. This chain is Phosphoglycerol transferase I, found in Salmonella schwarzengrund (strain CVM19633).